A 988-amino-acid chain; its full sequence is MPGGKRGLVAPQNTFLENIVRRSSESSFLLGNAQIVDWPVVYSNDGFCKLSGYHRADVMQKSSTCSFMYGELTDKKTIEKVRQTFDNYESNCFEVLLYKKNRTPVWFYMQIAPIRNEHEKVVLFLCTFKDITLFKQPIEDDSTKGWTKFARLTRALTNSRSVLQQLTPMNKTETVHKHSRLAEVLQLGSDILPQYKQEAPKTPPHIILHYCAFKTTWDWVILILTFYTAIMVPYNVSFKTKQNNIAWLVLDSVVDVIFLVDIVLNFHTTFVGPGGEVISDPKLIRMNYLKTWFVIDLLSCLPYDIINAFENVDEGISSLFSSLKVVRLLRLGRVARKLDHYLEYGAAVLVLLVCVFGLVAHWLACIWYSIGDYEVIDEVTNTIQIDSWLYQLALSIGTPYRYNTSAGIWEGGPSKDSLYVSSLYFTMTSLTTIGFGNIAPTTDVEKMFSVAMMMVGSLLYATIFGNVTTIFQQMYANTNRYHEMLNNVRDFLKLYQVPKGLSERVMDYIVSTWSMSKGIDTEKVLSICPKDMRADICVHLNRKVFNEHPAFRLASDGCLRALAVEFQTIHCAPGDLIYHAGESVDALCFVVSGSLEVIQDEEVVAILGKGDVFGDIFWKETTLAHACANVRALTYCDLHIIKREALLKVLDFYTAFANSFSRNLTLTCNLRKRIIFRKISDVKKEEEERLRQKNEVTLSIPVDHPVRKLFQKFKQQKELRNQGSAQSDPERSQLQVESRPLQNGASITGTSVVTVSQITPIQTSLAYVKTSETLKQNNRDAMELKPNGGAEPKCLKVNSPIRMKNGNGKGWLRLKNNMGAHEEKKEEWNNVTKAESMGLLSEDPKGSDSENSVTKNPLRKTDSCDSGITKSDLRLDKAGEARSPLEHSPSQADAKHPFYPIPEQALQTTLQEVKHELKEDIQLLSCRMTALEKQVAEILKLLSEKSVPQTSSPKPQIPLQVPPQIPCQDIFSVSRPESPESDKDEINF.

Over 1–217 (MPGGKRGLVA…LHYCAFKTTW (217 aa)) the chain is Cytoplasmic. A PAS domain is found at 14-86 (TFLENIVRRS…TIEKVRQTFD (73 aa)). The region spanning 91–143 (NCFEVLLYKKNRTPVWFYMQIAPIRNEHEKVVLFLCTFKDITLFKQPIEDDST) is the PAC domain. A helical transmembrane segment spans residues 218–238 (DWVILILTFYTAIMVPYNVSF). Residues 239 to 243 (KTKQN) are Extracellular-facing. Residues 244 to 264 (NIAWLVLDSVVDVIFLVDIVL) form a helical membrane-spanning segment. The Cytoplasmic segment spans residues 265–291 (NFHTTFVGPGGEVISDPKLIRMNYLKT). The chain crosses the membrane as a helical span at residues 292–312 (WFVIDLLSCLPYDIINAFENV). The Extracellular segment spans residues 313–319 (DEGISSL). The chain crosses the membrane as a helical; Voltage-sensor span at residues 320-340 (FSSLKVVRLLRLGRVARKLDH). Residues 341 to 346 (YLEYGA) are Cytoplasmic-facing. A helical membrane pass occupies residues 347 to 367 (AVLVLLVCVFGLVAHWLACIW). The Extracellular segment spans residues 368–419 (YSIGDYEVIDEVTNTIQIDSWLYQLALSIGTPYRYNTSAGIWEGGPSKDSLY). Asn-403 is a glycosylation site (N-linked (GlcNAc...) asparagine). Residues 420–440 (VSSLYFTMTSLTTIGFGNIAP) constitute an intramembrane region (pore-forming). The short motif at 432–437 (TIGFGN) is the Selectivity filter element. Residues 441–446 (TTDVEK) lie on the Extracellular side of the membrane. A helical membrane pass occupies residues 447-467 (MFSVAMMMVGSLLYATIFGNV). At 468–988 (TTIFQQMYAN…PESDKDEINF (521 aa)) the chain is on the cytoplasmic side. 550–667 (AFRLASDGCL…NSFSRNLTLT (118 aa)) is a binding site for a nucleoside 3',5'-cyclic phosphate. Residues 704–715 (HPVRKLFQKFKQ) are calmodulin-binding. Residues 718–742 (ELRNQGSAQSDPERSQLQVESRPLQ) form a disordered region. Positions 721 to 742 (NQGSAQSDPERSQLQVESRPLQ) are enriched in polar residues. Residue Lys-785 forms a Glycyl lysine isopeptide (Lys-Gly) (interchain with G-Cter in ubiquitin) linkage. 2 disordered regions span residues 839 to 897 (LLSE…AKHP) and 946 to 965 (SVPQTSSPKPQIPLQVPPQI). Residues 871-885 (SDLRLDKAGEARSPL) are compositionally biased toward basic and acidic residues. Phosphoserine is present on Ser-883. The tract at residues 909-948 (TLQEVKHELKEDIQLLSCRMTALEKQVAEILKLLSEKSVP) is CAD (involved in subunit assembly).

This sequence belongs to the potassium channel family. H (Eag) (TC 1.A.1.20) subfamily. Kv10.2/KCNH5 sub-subfamily. In terms of assembly, homotetramer. The potassium channel is probably composed of a homo- or heterotetrameric complex of pore-forming alpha subunits that can associate with modulating beta subunits. Heteromultimer with KCNH1/EAG. Detected in adult testis and in embryonic and adult brain, but not in other tissues. Highly expressed in specific brain areas, such as neocortex, olfactory bulb, primary olfactory cortex and brain stem. In cortex, expression is concentrated in a narrow band toward the middle lamella (layer IV). Moderately expressed in spinal cord, dorsal thalamic nuclei, medial hypothalamus, colliculus, lateral lemniscus, pontine nuclei and Islands of Calleja.

It is found in the membrane. The enzyme catalyses K(+)(in) = K(+)(out). Its activity is regulated as follows. Inhibited by low nanomolar concentrations of cytosolic calcium. In terms of biological role, pore-forming (alpha) subunit of a voltage-gated delayed rectifier potassium channel that mediates outward-rectifying potassium currents which, on depolarization, reaches a steady-state level and do not inactivate. The kinetic is characterized by a slow activation time course and a small voltage dependence of the activation time constants, therefore, starts to open at more negative voltages. The activation kinetics depend on the prepulse potential and external divalent cation concentration. The time course of activation is biphasic with a fast and a slowly activating current component. With negative prepulses, the current activation is delayed and slowed down several fold, whereas more positive prepulses speed up activation, therefore the activation rate depends on holding potential. The sequence is that of Voltage-gated delayed rectifier potassium channel KCNH5 from Rattus norvegicus (Rat).